Consider the following 165-residue polypeptide: MHTMEVKEYRVGIADLNVAKSPDRIITVGLGSCIGIALYDRINGVGGLLHIMLPDSTQFKNVSNPLKFPDLGIIIMTDKMKEKGANIRNIKAKISGGASMFNFSDKSMVMDIGRRNIEAVRKKLKELSIPIVAEEVGGNKGRTMTLDTSNGIVQIKTVGVGMKEI.

It belongs to the CheD family.

The catalysed reaction is L-glutaminyl-[protein] + H2O = L-glutamyl-[protein] + NH4(+). In terms of biological role, probably deamidates glutamine residues to glutamate on methyl-accepting chemotaxis receptors (MCPs), playing an important role in chemotaxis. The polypeptide is Probable chemoreceptor glutamine deamidase CheD (Clostridium tetani (strain Massachusetts / E88)).